Reading from the N-terminus, the 111-residue chain is Large ribosomal subunit protein uL22 (111 aa).

It belongs to the universal ribosomal protein uL22 family. As to quaternary structure, part of the 50S ribosomal subunit.

Its function is as follows. This protein binds specifically to 23S rRNA; its binding is stimulated by other ribosomal proteins, e.g. L4, L17, and L20. It is important during the early stages of 50S assembly. It makes multiple contacts with different domains of the 23S rRNA in the assembled 50S subunit and ribosome. The globular domain of the protein is located near the polypeptide exit tunnel on the outside of the subunit, while an extended beta-hairpin is found that lines the wall of the exit tunnel in the center of the 70S ribosome. The polypeptide is Large ribosomal subunit protein uL22 (Fusobacterium nucleatum subsp. nucleatum (strain ATCC 25586 / DSM 15643 / BCRC 10681 / CIP 101130 / JCM 8532 / KCTC 2640 / LMG 13131 / VPI 4355)).